A 629-amino-acid chain; its full sequence is MGQLSILCLFVTVCASVCGYSWPSDETTTKPSQFKDFHTDPLVVETTSGLVRGYSKTVLGREVHVFTGIPFAKPPIEQLRFKKPVPIDPWHGILDATKQPNSCFQERYEYFPGFEGEEMWNPNTNISEDCLYLNIWVPQRLRIRHHADKPTIDRPKVPVLIWIYGGGYMSGTATLDVYDADIIAATSDVIVASMQYRLGSFGFLYLNRYFPRGSDETPGNMGLWDQILAIRWIKDNAAAFGGDPDLITLFGESAGGGSISIHLISPVTKGLVRRGIMQSGTMNAPWSYMSGERAEQIGKILIQDCGCNVSLLENSPRKVMDCMRAVDAKTISLQQWNSYSGILGFPSTPTIEGVLLPKHPMDMLAEGDYEDMEILLGSNHDEGTYFLLYDFIDFFEKDGPSFLQREKYHDIIDTIFKNMSRLERDAIVFQYTNWEHVHDGYLNQKMIGDVVGDYFFVCPTNNFAEVAADRGMKVFYYYFTHRTSTSLWGEWMGVIHGDEVEYVFGHPLNMSLQFNSRERELSLKIMQAFARFATTGKPVTDDVNWPLYTKDQPQYFIFNADKNGIGKGPRATACAFWNDFLPKLRDNSGSEEAPCVNTYLSKIRSSSNELLPPSTSLVLIWIMTLLNAL.

The signal sequence occupies residues 1–38 (MGQLSILCLFVTVCASVCGYSWPSDETTTKPSQFKDFH). An intrachain disulfide couples cysteine 103 to cysteine 130. Asparagine 125 carries N-linked (GlcNAc...) asparagine glycosylation. Serine 253 (acyl-ester intermediate) is an active-site residue. A disulfide bridge links cysteine 307 with cysteine 322. N-linked (GlcNAc...) asparagine glycosylation occurs at asparagine 308. Glutamate 382 acts as the Charge relay system in catalysis. Asparagine 418 is a glycosylation site (N-linked (GlcNAc...) asparagine). A disulfide bridge connects residues cysteine 458 and cysteine 574. Residue histidine 496 is the Charge relay system of the active site. An N-linked (GlcNAc...) asparagine glycan is attached at asparagine 509. Serine 605 is lipidated: GPI-anchor amidated serine. The propeptide at 606 to 629 (SSNELLPPSTSLVLIWIMTLLNAL) is removed in mature form.

It belongs to the type-B carboxylesterase/lipase family. In terms of assembly, homodimer; disulfide-linked. In terms of processing, the N-terminus is blocked.

It localises to the synapse. It is found in the cell membrane. The catalysed reaction is acetylcholine + H2O = choline + acetate + H(+). Its function is as follows. Rapidly hydrolyzes choline released into the synapse. This is Acetylcholinesterase from Leptinotarsa decemlineata (Colorado potato beetle).